An 829-amino-acid chain; its full sequence is Leucine--tRNA ligase (829 aa).

The short motif at 42-52 (PYPSGNLHMGH) is the 'HIGH' region element. A 'KMSKS' region motif is present at residues 582–586 (KMSKS). Lys585 is an ATP binding site.

Belongs to the class-I aminoacyl-tRNA synthetase family.

It is found in the cytoplasm. The enzyme catalyses tRNA(Leu) + L-leucine + ATP = L-leucyl-tRNA(Leu) + AMP + diphosphate. The polypeptide is Leucine--tRNA ligase (Moorella thermoacetica (strain ATCC 39073 / JCM 9320)).